Here is a 1073-residue protein sequence, read N- to C-terminus: Duffy receptor alpha form (1073 aa).

The signal sequence occupies residues 1-21 (MEGKKKRPLFFLLVLLLSHKA). Residues 22-1007 (NNVLFERMNG…YECFTKGSST (986 aa)) lie on the Extracellular side of the membrane. Residues N134, N179, and N202 are each glycosylated (N-linked (GlcNAc...) asparagine). 2 cysteine pairs are disulfide-bonded: C214/C243 and C227/C234. 2 N-linked (GlcNAc...) asparagine glycosylation sites follow: N252 and N348. Disulfide bonds link C297–C374, C412–C429, C424–C504, and C433–C502. The interval 517 to 915 (VKNVGSGVES…LNNRKLNRDQ (399 aa)) is disordered. Residues 528 to 543 (AASSNPITEAVKSSSG) show a composition bias toward polar residues. A compositionally biased stretch (basic and acidic residues) spans 546–561 (KVQEDSAHKSVNKGEG). Polar residues predominate over residues 562-576 (KSSTNEADPGSQSGA). Basic and acidic residues-rich tracts occupy residues 675–710 (GEVHNGTDTEPKEDGEKADPQKDIEVKGKQDTDDRS) and 717–734 (HTDERATLGETHMEKDTE). The N-linked (GlcNAc...) asparagine glycan is linked to N679. Positions 736–766 (AGGSTLTPEQNVSVASDNGNVPGSGNKQNEG) are enriched in polar residues. N-linked (GlcNAc...) asparagine glycosylation is found at N746, N779, and N788. Positions 799 to 810 (GNEKDFQKHDFM) are enriched in basic and acidic residues. 2 stretches are compositionally biased toward low complexity: residues 821 to 843 (SDHTSSDQTSSDHTSSDQTSSDH) and 851 to 864 (SDQTSSDQTSSDQT). Positions 867-891 (TEGHHRDNVRNPEIKSSEDMSKGDF) are enriched in basic and acidic residues. Over residues 893-909 (RNSNSNELYSHNNLNNR) the composition is skewed to polar residues. The helical transmembrane segment at 1008 to 1029 (GIVYFATGGAFLIILLLFASWN) threads the bilayer. Residues 1030 to 1073 (AASNDYEEEATFDEFVEYSDDIHRTPLMPNDIEHMQQFTPLDYS) lie on the Cytoplasmic side of the membrane.

In terms of assembly, interacts (via region II) with human ACKR1 (via N-terminal extracellular domain). Interacts (via region II) with rhesus macaque ACKR1 (via N-terminal extracellular domain).

It localises to the cell membrane. The protein localises to the cytoplasmic vesicle. The protein resides in the secretory vesicle. It is found in the microneme. Functionally, binds to the human erythrocyte Duffy blood group determinant (ACKR1). Binds to the rhesus macaque erythrocyte Duffy blood group determinant (ACKR1). The polypeptide is Duffy receptor alpha form (Plasmodium knowlesi).